The chain runs to 280 residues: uncharacterized protein (280 aa).

The protein belongs to the herpesviridae BDLF2 family.

This is an uncharacterized protein from Saimiri sciureus (Common squirrel monkey).